The chain runs to 910 residues: Protein translocase subunit SecA (910 aa).

Residues Gln-87, 105-109 (GEGKT), and Asp-501 each bind ATP. 4 residues coordinate Zn(2+): Cys-894, Cys-896, Cys-905, and His-906.

Belongs to the SecA family. In terms of assembly, monomer and homodimer. Part of the essential Sec protein translocation apparatus which comprises SecA, SecYEG and auxiliary proteins SecDF-YajC and YidC. Requires Zn(2+) as cofactor.

It localises to the cell inner membrane. Its subcellular location is the cytoplasm. The catalysed reaction is ATP + H2O + cellular proteinSide 1 = ADP + phosphate + cellular proteinSide 2.. In terms of biological role, part of the Sec protein translocase complex. Interacts with the SecYEG preprotein conducting channel. Has a central role in coupling the hydrolysis of ATP to the transfer of proteins into and across the cell membrane, serving both as a receptor for the preprotein-SecB complex and as an ATP-driven molecular motor driving the stepwise translocation of polypeptide chains across the membrane. The protein is Protein translocase subunit SecA of Acidiphilium cryptum (strain JF-5).